The chain runs to 957 residues: SLIT and NTRK-like protein 5 (957 aa).

The N-terminal stretch at 1–40 (MHVCCPPVTLEQDLHRKMHSWMLQTLAFAVTSLVLSCAET) is a signal peptide. The Extracellular segment spans residues 41–664 (IDYYGEICDN…GTGASSVPLS (624 aa)). LRR repeat units follow at residues 82–103 (PIYH…EFVN), 106–127 (GASI…AFHG), 130–151 (GLRR…TFLG), 154–175 (NLEY…AFGK), 178–199 (MLQV…LFRF), and 201–222 (PLTH…GLLQ). N-linked (GlcNAc...) asparagine glycosylation is present at Asn103. Residues 235–286 (NPWNCSCELISLKDWLDSISYSALVGDVVCETPFRLHGRDLDEVSKQELCPR) enclose the LRRCT 1 domain. A disordered region spans residues 317–358 (ATSSSAVYKPPLKPPKGTRQPNKPRVRPTSRQPSKDLGYSNY). An LRRNT domain is found at 365–407 (QTKSPVPLECPTACTCNLQISDLGLNVNCQERKIESIAELQPK). LRR repeat units lie at residues 410 to 431 (NPKK…DFLE), 434 to 455 (GLDL…AFGD), 458 to 479 (NLRR…LFYG), 482 to 503 (SLQY…TFDP), 506 to 527 (NLQL…VFSG), and 529 to 550 (TLLR…GVLD). In terms of domain architecture, LRRCT 2 spans 563–614 (NPWDCTCDVVGMKLWIEQLKVGVLVDEVICKAPKKFAETYMRSIKSELLCPD). The span at 623–632 (PTPSSIQVPS) shows a compositional bias: low complexity. A disordered region spans residues 623-642 (PTPSSIQVPSRTNAATPAVR). The N-linked (GlcNAc...) asparagine glycan is linked to Asn644. Residues 665–685 (VLILSLLLVFIMSVFVAAGLF) traverse the membrane as a helical segment. At 686–957 (VLVMKRRKKN…LEKQTTFSQF (272 aa)) the chain is on the cytoplasmic side. Residues 789–844 (SNHHLQQQPPPPPQQPQQQPPPQMQMQPGEEERRESHHLRSPAYSVSTIEPREDLL) are disordered. Over residues 796-811 (QPPPPPQQPQQQPPPQ) the composition is skewed to pro residues.

Belongs to the SLITRK family. As to expression, in the adult, significant expression is detected only in the brain. In the embryo, expressed in the subventricular zone, cortical plate, pyramidal layer of hippocampus, thalamus and hypothalamus.

Its subcellular location is the membrane. Its function is as follows. Suppresses neurite outgrowth. The sequence is that of SLIT and NTRK-like protein 5 (Slitrk5) from Mus musculus (Mouse).